The primary structure comprises 414 residues: Protein MAK11 (414 aa).

S2 carries the N-acetylserine modification. 6 WD repeats span residues 50–78 (AHSL…RIYD), 90–135 (SHQG…MVWR), 147–177 (GHTA…RLWN), 189–221 (LRKY…LIYE), 238–267 (LMHI…HFYP), and 298–330 (GHTN…VVWD). Phosphoserine occurs at positions 376 and 380. T382 is modified (phosphothreonine).

In terms of assembly, associates with 60S pre-ribosomal particles.

It is found in the nucleus. It localises to the nucleolus. The protein localises to the nucleus membrane. Its function is as follows. Essential for cell growth. Plays a role in assembly of 60S pre-ribosomal particles in the nucleolus. Also required for replication of the M1 double-stranded RNA of the L-A virus. This latter function may reflect an enhanced requirement for free 60S ribosomal particles for the translation of viral mRNAs which lack poly-A tails. The polypeptide is Protein MAK11 (MAK11) (Saccharomyces cerevisiae (strain ATCC 204508 / S288c) (Baker's yeast)).